The chain runs to 590 residues: Selenoprotein N (590 aa).

The disordered stretch occupies residues 1-26 (MGRARPGQRGPPSPGPAAQPPAPPRR). A signal peptide spans 1 to 43 (MGRARPGQRGPPSPGPAAQPPAPPRRRARSLALLGALLAAAAA). Pro residues predominate over residues 9–23 (RGPPSPGPAAQPPAP). In terms of domain architecture, EF-hand spans 67–102 (TLGTDGLFLFSSLDTDGDMYISPEEFKPIAEKLTGS). The N-linked (GlcNAc...) asparagine glycan is linked to Asn-126. Sec-127 is a non-standard amino acid (selenocysteine). Asn-190 is a glycosylation site (N-linked (GlcNAc...) asparagine). Position 462 (Sec-462) is a non-standard amino acid, selenocysteine. Asn-483, Asn-505, and Asn-531 each carry an N-linked (GlcNAc...) asparagine glycan.

In terms of assembly, interacts with RYR1, RYR2 and RYR3. N-glycosylated. In terms of tissue distribution, isoform 1 and isoform 2 are expressed in skeletal muscle, brain, lung and placenta. Isoform 2 is also expressed in heart, diaphragm and stomach.

It localises to the endoplasmic reticulum membrane. Plays an important role in cell protection against oxidative stress and in the regulation of redox-related calcium homeostasis. Regulates the calcium level of the ER by protecting the calcium pump ATP2A2 against the oxidoreductase ERO1A-mediated oxidative damage. Within the ER, ERO1A activity increases the concentration of H(2)O(2), which attacks the luminal thiols in ATP2A2 and thus leads to cysteinyl sulfenic acid formation (-SOH) and SEPN1 reduces the SOH back to free thiol (-SH), thus restoring ATP2A2 activity. Acts as a modulator of ryanodine receptor (RyR) activity: protects RyR from oxidation due to increased oxidative stress, or directly controls the RyR redox state, regulating the RyR-mediated calcium mobilization required for normal muscle development and differentiation. Functionally, essential for muscle regeneration and satellite cell maintenance in skeletal muscle. This Homo sapiens (Human) protein is Selenoprotein N.